Reading from the N-terminus, the 859-residue chain is Protein FAM171A1 (859 aa).

An N-terminal signal peptide occupies residues Met1–Gly20. The Extracellular segment spans residues Ala21–Thr307. 3 N-linked (GlcNAc...) asparagine glycosylation sites follow: Asn163, Asn194, and Asn198. Residues Ile308–Leu328 traverse the membrane as a helical segment. The Cytoplasmic portion of the chain corresponds to Leu329–Lys859. Disordered regions lie at residues Ser397–Leu421, Thr484–Glu509, and Gln771–Lys859. The segment covering Phe400–Met416 has biased composition (basic and acidic residues). 2 stretches are compositionally biased toward polar residues: residues Thr484–Glu497 and Ser797–Glu806. Basic and acidic residues predominate over residues Gly838–Pro852.

This sequence belongs to the FAM171 family.

The protein resides in the cell membrane. Its function is as follows. May be involved in the regulation of the cytoskeletal dynamics, plays a role in actin stress fiber formation. In Xenopus laevis (African clawed frog), this protein is Protein FAM171A1 (fam171a1).